A 527-amino-acid polypeptide reads, in one-letter code: Metal transporter Nramp6 (527 aa).

Helical transmembrane passes span 38 to 58 (FFSY…PGNF), 71 to 91 (ELLW…SLAA), 115 to 135 (FMLW…EVIG), 143 to 163 (LFNI…LILL), 173 to 193 (LEFL…VELH), 221 to 241 (ISLL…ALVL), 264 to 284 (GLAL…SGAV), 321 to 341 (LFAI…TYAG), 364 to 384 (CLAI…GAGK), 385 to 405 (LIII…VPLL), 427 to 447 (TWII…SSFI), and 458 to 478 (VAIV…LAAI).

It belongs to the NRAMP (TC 2.A.55) family. Expressed in the vascular bundles of shoots, cotyledons, young leaves, sepals and petals, at the top of the flower stem and in the style. Expressed in the peduncle of developing siliques as well as in the septum and the funiculi.

The protein resides in the endomembrane system. Functionally, probable intracellular cadmium (Cd) transporter that participates in the distribution or availability of Cd within the cell. This Arabidopsis thaliana (Mouse-ear cress) protein is Metal transporter Nramp6 (NRAMP6).